The chain runs to 448 residues: ATP-dependent protease ATPase subunit HslU (448 aa).

ATP contacts are provided by residues V21, 63-68 (GVGKTE), D261, E326, and R398.

It belongs to the ClpX chaperone family. HslU subfamily. In terms of assembly, a double ring-shaped homohexamer of HslV is capped on each side by a ring-shaped HslU homohexamer. The assembly of the HslU/HslV complex is dependent on binding of ATP.

Its subcellular location is the cytoplasm. In terms of biological role, ATPase subunit of a proteasome-like degradation complex; this subunit has chaperone activity. The binding of ATP and its subsequent hydrolysis by HslU are essential for unfolding of protein substrates subsequently hydrolyzed by HslV. HslU recognizes the N-terminal part of its protein substrates and unfolds these before they are guided to HslV for hydrolysis. This Persephonella marina (strain DSM 14350 / EX-H1) protein is ATP-dependent protease ATPase subunit HslU.